The following is a 142-amino-acid chain: HTH-type transcriptional regulator MntR (142 aa).

Residues 1 to 63 enclose the HTH dtxR-type domain; that stretch reads MPTPSMEDYI…YEKYRGLVLT (63 aa). Aspartate 8, glutamate 11, histidine 77, glutamate 99, glutamate 102, and histidine 103 together coordinate Mn(2+).

It belongs to the DtxR/MntR family. Homodimer.

It is found in the cytoplasm. With respect to regulation, DNA binding is strongly activated by Mn(2+). Central regulator of manganese homeostasis. This Bacillus cereus (strain B4264) protein is HTH-type transcriptional regulator MntR.